The following is a 517-amino-acid chain: MAIAEALLFVNNRAVEHPLQFLTAVAFAVPLLYVVINEFIRASARIPGFKGPRGLPLIGNLAQIRKDAAEQYRIWSKIYGPVYQIQLGNIPVLVVNSAAAAKVLFGQNAQALSSRPEFYTFHKIVSNTAGTTIGTSPYSESLKRRRKGAASALNRPSVESYVHHLDVESKAFVAELFKYGNGGKTPVDPMAMIQRLSLSLALTLNWGVRVASQEEELFDEITEVEDKISKFRSTTGNLQDYIPILRLNPFSSNSHKAKEMRDRRDKYLSSLNRDLDDRMEKGTHKPCIQANVILDKEAKLNSEELTSISLTMLSGGLDTVTTLVAWSISLLAQRPDIQDKAAKAIQEMYSEGQPLCDPADDQKCAYVAALVRECLRYYTVLRLALPRTSIRDITYDGKVIPKGTVFFLNAWACNMDPEVWSDPDEFRPERWFEQPDAPMFTYGMGYRMCAGSLLANRELYLVFIRTLNSFRIEPTEEKIEWHPLKGNSDPTSLVAIPKKYKVRFVPKNEVSLVEALS.

Cysteine 449 is a heme binding site.

This sequence belongs to the cytochrome P450 family.

It catalyses the reaction 3-hydroxyphenylacetate + NADH + O2 + H(+) = homogentisate + NAD(+) + H2O. The enzyme catalyses 3-hydroxyphenylacetate + NADPH + O2 + H(+) = homogentisate + NADP(+) + H2O. It carries out the reaction 3,4-dihydroxyphenylacetate + NADH + O2 + H(+) = 2,4,5-trihydroxyphenylacetate + NAD(+) + H2O. The catalysed reaction is 3,4-dihydroxyphenylacetate + NADPH + O2 + H(+) = 2,4,5-trihydroxyphenylacetate + NADP(+) + H2O. It functions in the pathway aromatic compound metabolism; phenylacetate degradation. Its function is as follows. Catalyzes the hydroxylation of 3-hydroxyphenylacetate and 3,4-dihydroxyphenylacetate to 2,5-dihydroxyphenylacetate (homogentisate) and 2,4,5-trihydroxyphenylacetate, respectively. Both of these compounds are used as substrate by homogentisate dioxygenase in the homogentisate pathway. The homogentisate pathway is used to catabolize phenylacetate and use it as a carbon source. Can also catalyze the hydroxylation of phenylacetate to 2-hydroxyphenylacetate at low efficiency to compensate for loss of phacA. This is 3-hydroxyphenylacetate 6-hydroxylase (phacB) from Emericella nidulans (Aspergillus nidulans).